Consider the following 299-residue polypeptide: DNA-binding transcriptional activator HetR (299 aa).

S152 is a catalytic residue.

It belongs to the peptidase S48 family. As to quaternary structure, homodimer; disulfide-linked.

In terms of biological role, might be involved in temporal and/or spatial regulation of nitrogen fixation. Dimerization is required for DNA-binding. Has both a protease and a DNA-binding activity. This Leptolyngbya boryana (Plectonema boryanum) protein is DNA-binding transcriptional activator HetR.